The chain runs to 166 residues: Ribosome maturation factor RimM (166 aa).

In terms of domain architecture, PRC barrel spans 94–165; it reads EGEYYLGKLI…TIELKVLDLL (72 aa).

It belongs to the RimM family. In terms of assembly, binds ribosomal protein uS19.

The protein localises to the cytoplasm. Functionally, an accessory protein needed during the final step in the assembly of 30S ribosomal subunit, possibly for assembly of the head region. Essential for efficient processing of 16S rRNA. May be needed both before and after RbfA during the maturation of 16S rRNA. It has affinity for free ribosomal 30S subunits but not for 70S ribosomes. This chain is Ribosome maturation factor RimM, found in Borrelia garinii subsp. bavariensis (strain ATCC BAA-2496 / DSM 23469 / PBi) (Borreliella bavariensis).